Here is a 141-residue protein sequence, read N- to C-terminus: Nucleoside diphosphate kinase (141 aa).

Lysine 11, phenylalanine 59, arginine 87, threonine 93, arginine 104, and asparagine 114 together coordinate ATP. Residue histidine 117 is the Pros-phosphohistidine intermediate of the active site.

This sequence belongs to the NDK family. As to quaternary structure, homotetramer. It depends on Mg(2+) as a cofactor.

It is found in the cytoplasm. The enzyme catalyses a 2'-deoxyribonucleoside 5'-diphosphate + ATP = a 2'-deoxyribonucleoside 5'-triphosphate + ADP. It carries out the reaction a ribonucleoside 5'-diphosphate + ATP = a ribonucleoside 5'-triphosphate + ADP. Major role in the synthesis of nucleoside triphosphates other than ATP. The ATP gamma phosphate is transferred to the NDP beta phosphate via a ping-pong mechanism, using a phosphorylated active-site intermediate. This Legionella pneumophila (strain Paris) protein is Nucleoside diphosphate kinase.